The primary structure comprises 308 residues: HTH-type transcriptional activator AllS (308 aa).

The region spanning 2–59 (FDPETLRTFISVAETGSFSKAAERLCKTTATTSYRIKLLEENTGVGLFFRTTRSVSLT) is the HTH lysR-type domain. The H-T-H motif DNA-binding region spans 19–38 (FSKAAERLCKTTATTSYRIK).

This sequence belongs to the LysR transcriptional regulatory family.

Its function is as follows. Positive regulator essential for the expression of allD operon. Binds to the allD promoter. The polypeptide is HTH-type transcriptional activator AllS (allS) (Salmonella typhi).